The sequence spans 262 residues: Probable esterase azaC (262 aa).

Residues serine 119, aspartate 188, and histidine 216 each act as charge relay system in the active site.

This sequence belongs to the LovG family.

Its pathway is secondary metabolite biosynthesis. Probable esterase; part of the gene cluster that mediates the biosynthesis of azaphilones, a class of fungal metabolites characterized by a highly oxygenated pyrano-quinone bicyclic core and exhibiting a broad range of bioactivities. In the first step, the non-reducing polyketide synthase azaA forms the hexaketide precursor from successive condensations of five malonyl-CoA units, presumably with a simple acetyl-CoA starter unit. The reactive polyketide chain then undergoes a PT-mediated C2-C7 cyclization to afford the aromatic ring and is eventually released as an aldehyde through the R-domain. The putative ketoreductase azaE is proposed to catalyze the reduction of the terminal ketone resulting in the early culture product FK17-P2a. The monooxygenase azaH was demonstrated to be the only enzyme required to convert FK17-P2a to azanigerone E. AzaH first hydroxylates the benzaldehyde intermediate FK17-P2a at C4, which triggers the formation of the pyran-ring to afford azanigerone E. In parallel, the 2,4-dimethylhexanoyl chain is synthesized by the HR-PKS azaB and is proposed to be transferred to the C4-hydroxyl of azanigerone E by the acyltransferase azaD directly from the ACP domain of azaB. Alternatively, the 2,4-dimethyl-hexanoyl chain may be offloaded from the HR-PKS as a carboxylic acid and converted to an acyl-CoA by azaF. The resulting acyl-CoA molecule could then be taken up as a substrate by AzaD to form azanigerone B. To yield the carboxylic acid substituent in azanigerone A, the hydroxypropyl side chain of azanigerone B would need to undergo a C-C oxidative cleavage catalyzed by cytochrome P450 AzaI. AzaI is proposed to act on a vicinal diol that leads to a C-C bond scission either through an alkoxyradical intermediate or a peroxy complex. In the biosynthesis of azanigerone A, azanigerone B first undergoes hydroxylation at C10, possibly catalyzed by one of the two FAD-dependent monooxygenases encoded in the cluster, azaG or azaL, resulting in the vicinal diol azanigerone C. Oxidative cleavage of azanigerone C by azaI would yield the corresponding aldehyde derivative of azanigerone A. Finally, the dehydrogenase azaJ is proposed to convert the aldehyde functional group into the carboxylic acid, completing the conversion from azanigerone B to azanigerone A. Alternatively, the oxidation of aldehyde to carboxylic acid may be catalyzed by the same P450 enzyme azaI via consecutive oxidation or by endogenous alcohol dehydrogenase. This chain is Probable esterase azaC, found in Aspergillus niger (strain ATCC 1015 / CBS 113.46 / FGSC A1144 / LSHB Ac4 / NCTC 3858a / NRRL 328 / USDA 3528.7).